The following is a 477-amino-acid chain: Cysteine protease ATG4b (477 aa).

A disordered region spans residues 11-39 (SKCSSSSTSEKRDISSPTSLVSDSASSDN). Residues 25 to 39 (SSPTSLVSDSASSDN) show a composition bias toward polar residues. Residue Cys173 is the Nucleophile of the active site. Catalysis depends on residues Asp368 and His370. The tract at residues 453-477 (AETSSSTETSTEISGEEHEDDWQLL) is disordered. The span at 454–465 (ETSSSTETSTEI) shows a compositional bias: low complexity.

Belongs to the peptidase C54 family. As to quaternary structure, interacts with ATG8a and ATG8d. Constitutively expressed.

The protein localises to the cytoplasm. The enzyme catalyses [protein]-C-terminal L-amino acid-glycyl-phosphatidylethanolamide + H2O = [protein]-C-terminal L-amino acid-glycine + a 1,2-diacyl-sn-glycero-3-phosphoethanolamine. In terms of biological role, cysteine protease that plays a key role in autophagy by mediating both proteolytic activation and delipidation of ATG8 family proteins. The protease activity is required for proteolytic activation of ATG8 family proteins: cleaves the C-terminal amino acid of ATG8 proteins to reveal a C-terminal glycine. Exposure of the glycine at the C-terminus is essential for ATG8 proteins conjugation to phosphatidylethanolamine (PE) and insertion to membranes, which is necessary for autophagy. In addition to the protease activity, also mediates delipidation of PE-conjugated ATG8 proteins. The chain is Cysteine protease ATG4b from Arabidopsis thaliana (Mouse-ear cress).